Consider the following 415-residue polypeptide: SNF1 protein kinase subunit beta-2 (415 aa).

Disordered regions lie at residues 1–43 (MGTT…EMDA), 55–158 (KCSD…PSEI), and 249–276 (EKNP…SSIA). The N-myristoyl glycine moiety is linked to residue Gly2. Positions 9–19 (AQKKQTTKKCR) are enriched in basic residues. A compositionally biased stretch (polar residues) spans 55 to 69 (KCSDSQDAGQPSREG). Phosphoserine is present on Ser66. Basic and acidic residues-rich tracts occupy residues 122–150 (PKQD…RAKE) and 249–264 (EKNP…EADS). Residues 154–335 (GPSEIKSSLM…LDRQQSNTDT (182 aa)) are kinase-interacting sequence (KIS); required for interaction with SNF1. Residue Ser298 is modified to Phosphoserine. The association with SNF1 kinase complex (ASC) domain; required for interaction with SNF4 stretch occupies residues 336–415 (SWLTPPQLPP…QILYTPIESS (80 aa)).

The protein belongs to the 5'-AMP-activated protein kinase beta subunit family. As to quaternary structure, component of the SNF1 kinase complex, a heterotrimeric complex composed of the catalytic alpha subunit SNF1, one of the three related beta subunits SIP1, SIP2 or GAL83, and the regulatory gamma subunit SNF4. The beta subunit serves as a bridge between the catalytic and the regulatory subunit. Interacts (via KIS domain) with SNF1. Interacts (via ASC domain) with SNF4. Phosphorylated by SNF1 in vitro.

The protein localises to the cytoplasm. It is found in the cell membrane. In terms of biological role, beta subunit of the SNF1 kinase complex, which is required for transcriptional, metabolic, and developmental adaptations in response to glucose limitation. Has a structural role, mediating heterotrimer formation, and a regulatory role, defining carbon source-regulated subcellular location and substrate specificity of the SNF1 kinase complex. Involved in the regulation of aging. Acts as a negative regulator of nuclear SNF1 activity in young cells by sequestering its activating gamma subunit at the plasma membrane. This Saccharomyces cerevisiae (strain ATCC 204508 / S288c) (Baker's yeast) protein is SNF1 protein kinase subunit beta-2 (SIP2).